The chain runs to 377 residues: Presenilin-associated rhomboid-like protein, mitochondrial (377 aa).

The N-terminal 50 residues, 1-50, are a transit peptide targeting the mitochondrion; sequence MALQGWVQRGWRCGPAWAPPLGGGYRELSATQAPRLLGRRFNLFVQQKCG. Residues 51–99 are Mitochondrial matrix-facing; sequence FRKAPRKVEPRRSDTGSSGEAYKRSALIPPLEETVFYPSPYPIRTLVKP. Residues Ser-63 and Ser-68 each carry the phosphoserine modification. Residues 100 to 119 traverse the membrane as a helical segment; that stretch reads FFFTIGFTGCAFGSAAIWQY. Residues 120–165 lie on the Mitochondrial intermembrane side of the membrane; it reads ESLKSRVQSYFDGIKADWLDSIRPQKEGNLRKEINKWWNSLSDGQR. Residues 166-185 traverse the membrane as a helical segment; the sequence is TVTGIIAANALVFCLWRVPS. Residues 186 to 205 lie on the Mitochondrial matrix side of the membrane; that stretch reads LQRTMIRYFTSNPASKVLCS. A helical transmembrane segment spans residues 206–228; the sequence is PMLLSTFSHFSLFHMAANMYVLW. At 229–242 the chain is on the mitochondrial intermembrane side; that stretch reads SFSSSIVNILGQEQ. A helical transmembrane segment spans residues 243-260; that stretch reads FVAVYLSAGVISNFVSYV. Over 261–270 the chain is Mitochondrial matrix; sequence CKVATGRYGP. Residues 271-287 form a helical membrane-spanning segment; that stretch reads SLGASGAIMTVLAAVCT. The active-site Nucleophile is the Ser-275. Topologically, residues 288-293 are mitochondrial intermembrane; the sequence is KIPEGR. Residues 294 to 316 traverse the membrane as a helical segment; it reads LAIIFLPVFTFTAGNALKAIIAM. Over 317 to 330 the chain is Mitochondrial matrix; sequence DTAGMILGWKFFDH. The helical transmembrane segment at 331-352 threads the bilayer; it reads AAHLGGALFGIWYITYGHELIW. His-333 is an active-site residue. Topologically, residues 353–377 are mitochondrial intermembrane; it reads KNREPLVKIWHEIRTNGPKKGGGSK.

The protein belongs to the peptidase S54 family. Interacts with PSEN1 and PSEN2. Binds OPA1. In terms of processing, P-beta is proteolytically processed (beta-cleavage) in a PARL-dependent manner.

It is found in the mitochondrion inner membrane. It localises to the nucleus. The catalysed reaction is Cleaves type-1 transmembrane domains using a catalytic dyad composed of serine and histidine that are contributed by different transmembrane domains.. Required for the control of apoptosis during postnatal growth. Essential for proteolytic processing of an antiapoptotic form of OPA1 which prevents the release of mitochondrial cytochrome c in response to intrinsic apoptotic signals. Required for the maturation of PINK1 into its 52kDa mature form after its cleavage by mitochondrial-processing peptidase (MPP). Promotes cleavage of serine/threonine-protein phosphatase PGAM5 in damaged mitochondria in response to loss of mitochondrial membrane potential. Mediates differential cleavage of PINK1 and PGAM5 depending on the health status of mitochondria, disassociating from PINK1 and associating with PGAM5 in response to mitochondrial membrane potential loss. Required for processing of CLPB into a form with higher protein disaggregase activity by removing an autoinhibitory N-terminal peptide. Promotes processing of DIABLO/SMAC in the mitochondrion which is required for DIABLO apoptotic activity. Also required for cleavage of STARD7 and TTC19. Promotes changes in mitochondria morphology regulated by phosphorylation of P-beta domain. This Mus musculus (Mouse) protein is Presenilin-associated rhomboid-like protein, mitochondrial (Parl).